Here is a 235-residue protein sequence, read N- to C-terminus: Small ribosomal subunit protein uS2 (235 aa).

The protein belongs to the universal ribosomal protein uS2 family.

The chain is Small ribosomal subunit protein uS2 from Geobacillus kaustophilus (strain HTA426).